The primary structure comprises 186 residues: Translation initiation factor IF-3 (186 aa).

The interval 1 to 21 (MINRSSGKDRDRSRSGDKELR) is disordered.

This sequence belongs to the IF-3 family. In terms of assembly, monomer.

The protein resides in the cytoplasm. Functionally, IF-3 binds to the 30S ribosomal subunit and shifts the equilibrium between 70S ribosomes and their 50S and 30S subunits in favor of the free subunits, thus enhancing the availability of 30S subunits on which protein synthesis initiation begins. The polypeptide is Translation initiation factor IF-3 (Borrelia turicatae (strain 91E135)).